Here is a 207-residue protein sequence, read N- to C-terminus: Suppressor of IKBKE 1 (207 aa).

Coiled-coil stretches lie at residues 70 to 102 and 164 to 192; these read HILL…DALE and CKVQ…ESLQ.

The protein belongs to the SIKE family. As to quaternary structure, interacts with IKBKE and TBK1 via its coiled coil region. Interaction with TBK1 is disrupted upon viral infection or TLR3 stimulation. Interacts with CDC42BPB. Interacts with SIKE1 which mediates association with the STRIPAK core complex composed of PP2A catalytic and scaffolding subunits, the striatins (PP2A regulatory subunits), the striatin-associated proteins MOB4, STRIP1 and STRIP2, PDCD10 and members of the STE20 kinases, such as STK24 and STK26.

It localises to the cytoplasm. In terms of biological role, physiological suppressor of IKK-epsilon and TBK1 that plays an inhibitory role in virus- and TLR3-triggered IRF3. Inhibits TLR3-mediated activation of interferon-stimulated response elements (ISRE) and the IFN-beta promoter. May act by disrupting the interactions of IKBKE or TBK1 with TICAM1/TRIF, IRF3 and RIGI. Does not inhibit NF-kappa-B activation pathways. Associates with the striatin-interacting phosphatase and kinase (STRIPAK) core complex, forming the extended (SIKE1:SLMAP)STRIPAK complex. The (SIKE1:SLMAP)STRIPAK complex dephosphorylates STK3 leading to the inhibition of Hippo signaling and the control of cell growth. The polypeptide is Suppressor of IKBKE 1 (Sike1) (Mus musculus (Mouse)).